We begin with the raw amino-acid sequence, 94 residues long: Pyrimidine/purine nucleoside phosphorylase (94 aa).

The protein belongs to the nucleoside phosphorylase PpnP family.

The enzyme catalyses a purine D-ribonucleoside + phosphate = a purine nucleobase + alpha-D-ribose 1-phosphate. It carries out the reaction adenosine + phosphate = alpha-D-ribose 1-phosphate + adenine. It catalyses the reaction cytidine + phosphate = cytosine + alpha-D-ribose 1-phosphate. The catalysed reaction is guanosine + phosphate = alpha-D-ribose 1-phosphate + guanine. The enzyme catalyses inosine + phosphate = alpha-D-ribose 1-phosphate + hypoxanthine. It carries out the reaction thymidine + phosphate = 2-deoxy-alpha-D-ribose 1-phosphate + thymine. It catalyses the reaction uridine + phosphate = alpha-D-ribose 1-phosphate + uracil. The catalysed reaction is xanthosine + phosphate = alpha-D-ribose 1-phosphate + xanthine. In terms of biological role, catalyzes the phosphorolysis of diverse nucleosides, yielding D-ribose 1-phosphate and the respective free bases. Can use uridine, adenosine, guanosine, cytidine, thymidine, inosine and xanthosine as substrates. Also catalyzes the reverse reactions. The chain is Pyrimidine/purine nucleoside phosphorylase from Salmonella newport (strain SL254).